A 65-amino-acid chain; its full sequence is Large ribosomal subunit protein bL35 (65 aa).

Positions 1 to 26 are disordered; that stretch reads MPKIKTVRGAAKRFKKTASGGFKRKQ. Basic residues predominate over residues 10–26; the sequence is AAKRFKKTASGGFKRKQ.

It belongs to the bacterial ribosomal protein bL35 family.

This is Large ribosomal subunit protein bL35 from Mannheimia succiniciproducens (strain KCTC 0769BP / MBEL55E).